Consider the following 258-residue polypeptide: Probable dihydroorotate dehydrogenase B (NAD(+)), electron transfer subunit (258 aa).

The FAD-binding FR-type domain occupies 1–90; the sequence is MRPISATIKE…RGPYGNGWEI (90 aa). [2Fe-2S] cluster contacts are provided by cysteine 210, cysteine 215, cysteine 218, and cysteine 228.

Belongs to the PyrK family. In terms of assembly, heterotetramer of 2 PyrK and 2 PyrD type B subunits. The cofactor is [2Fe-2S] cluster. FAD serves as cofactor.

The protein operates within pyrimidine metabolism; UMP biosynthesis via de novo pathway; orotate from (S)-dihydroorotate (NAD(+) route): step 1/1. Responsible for channeling the electrons from the oxidation of dihydroorotate from the FMN redox center in the PyrD type B subunit to the ultimate electron acceptor NAD(+). In Methanocella arvoryzae (strain DSM 22066 / NBRC 105507 / MRE50), this protein is Probable dihydroorotate dehydrogenase B (NAD(+)), electron transfer subunit.